Consider the following 331-residue polypeptide: Pantothenate kinase (331 aa).

109 to 116 contributes to the ATP binding site; that stretch reads GSVAVGKS.

It belongs to the prokaryotic pantothenate kinase family.

The protein localises to the cytoplasm. It catalyses the reaction (R)-pantothenate + ATP = (R)-4'-phosphopantothenate + ADP + H(+). It functions in the pathway cofactor biosynthesis; coenzyme A biosynthesis; CoA from (R)-pantothenate: step 1/5. This Sinorhizobium medicae (strain WSM419) (Ensifer medicae) protein is Pantothenate kinase.